Reading from the N-terminus, the 907-residue chain is Lateral signaling target protein 2 homolog (907 aa).

Disordered regions lie at residues 339 to 395, 463 to 604, 662 to 688, 716 to 756, and 770 to 834; these read SSDN…DPAN, LTDS…SGDA, NSSP…PDPA, EVNA…SENG, and GSGG…EERR. A compositionally biased stretch (polar residues) spans 351-361; that stretch reads DISSFYTSNNR. A compositionally biased stretch (acidic residues) spans 367–393; sequence EPNEDDDVSESNDEDEDEGEEVDEDDP. 2 stretches are compositionally biased toward polar residues: residues 463 to 475 and 486 to 495; these read LTDS…NPSL and PVTSSHPIAQ. Residues 501-516 are compositionally biased toward acidic residues; sequence SEEEGEVDEYDEDDSE. Residues 525-549 are compositionally biased toward basic residues; the sequence is HHTKHQRRHRHHHHHHRKHYSKHRS. Low complexity predominate over residues 550-565; the sequence is SAAGSAGTSGTTCSAA. Residues 568–580 are compositionally biased toward polar residues; it reads QISSCDTSPSSGG. Over residues 592–602 the composition is skewed to gly residues; the sequence is GSSGNSSGGSG. Polar residues predominate over residues 742–751; it reads APRTMMTTAA. Residues 777–793 show a composition bias toward low complexity; it reads GSSRSSQERSVSLSETS. The span at 816–826 shows a compositional bias: polar residues; the sequence is PKSVQSEQSGQ. An FYVE-type zinc finger spans residues 845-905; it reads DGDAPRCMAC…VCRECFVREV (61 aa). Zn(2+)-binding residues include Cys851, Cys854, Cys867, Cys870, Cys875, Cys878, Cys897, and Cys900.

The protein belongs to the lst-2 family.

Functionally, negative regulator of epidermal growth factor receptor (EGFR) signaling. This chain is Lateral signaling target protein 2 homolog, found in Culex quinquefasciatus (Southern house mosquito).